The chain runs to 234 residues: MNVQQLKKRAAAKALEFVQDDMRLGIGTGSTANEFIRLLGERVADGLRVTGVATSQYSEQLCRKFGVPVTTLEQMPELDLDIDGADEIGPEMTLIKGGGGALWREKIVAAASRAMLVIADETKVVKTLGAFALPIEVNPFGMPATRRLIEKVADDLGLSGEIILRMNGENPFKTDGGHFIFDAFWGCILQPRLLSEALLAIPGVVEHGLFWGLASRAIVAMADGQIKVLESSDF.

Substrate is bound by residues 28 to 31 (TGST), 83 to 86 (DGAD), and 96 to 99 (KGGG). E105 (proton acceptor) is an active-site residue. Residue K123 coordinates substrate.

This sequence belongs to the ribose 5-phosphate isomerase family. In terms of assembly, homodimer.

It carries out the reaction aldehydo-D-ribose 5-phosphate = D-ribulose 5-phosphate. It participates in carbohydrate degradation; pentose phosphate pathway; D-ribose 5-phosphate from D-ribulose 5-phosphate (non-oxidative stage): step 1/1. Catalyzes the reversible conversion of ribose-5-phosphate to ribulose 5-phosphate. The sequence is that of Ribose-5-phosphate isomerase A from Bartonella quintana (strain Toulouse) (Rochalimaea quintana).